The primary structure comprises 430 residues: Enolase (430 aa).

Glutamine 166 contacts (2R)-2-phosphoglycerate. The active-site Proton donor is glutamate 208. Aspartate 245, glutamate 288, and aspartate 315 together coordinate Mg(2+). (2R)-2-phosphoglycerate contacts are provided by lysine 340, arginine 369, serine 370, and lysine 391. The Proton acceptor role is filled by lysine 340.

This sequence belongs to the enolase family. Mg(2+) serves as cofactor.

Its subcellular location is the cytoplasm. The protein localises to the secreted. It is found in the cell surface. It carries out the reaction (2R)-2-phosphoglycerate = phosphoenolpyruvate + H2O. It participates in carbohydrate degradation; glycolysis; pyruvate from D-glyceraldehyde 3-phosphate: step 4/5. Catalyzes the reversible conversion of 2-phosphoglycerate (2-PG) into phosphoenolpyruvate (PEP). It is essential for the degradation of carbohydrates via glycolysis. This chain is Enolase, found in Clostridium kluyveri (strain NBRC 12016).